The sequence spans 492 residues: Protein nucleotidyltransferase YdiU (492 aa).

Positions 88, 90, 91, 111, 123, 124, 174, and 181 each coordinate ATP. Catalysis depends on aspartate 250, which acts as the Proton acceptor. The Mg(2+) site is built by asparagine 251 and aspartate 260. Aspartate 260 serves as a coordination point for ATP.

This sequence belongs to the SELO family. The cofactor is Mg(2+). Requires Mn(2+) as cofactor.

The enzyme catalyses L-seryl-[protein] + ATP = 3-O-(5'-adenylyl)-L-seryl-[protein] + diphosphate. It carries out the reaction L-threonyl-[protein] + ATP = 3-O-(5'-adenylyl)-L-threonyl-[protein] + diphosphate. It catalyses the reaction L-tyrosyl-[protein] + ATP = O-(5'-adenylyl)-L-tyrosyl-[protein] + diphosphate. The catalysed reaction is L-histidyl-[protein] + UTP = N(tele)-(5'-uridylyl)-L-histidyl-[protein] + diphosphate. The enzyme catalyses L-seryl-[protein] + UTP = O-(5'-uridylyl)-L-seryl-[protein] + diphosphate. It carries out the reaction L-tyrosyl-[protein] + UTP = O-(5'-uridylyl)-L-tyrosyl-[protein] + diphosphate. Functionally, nucleotidyltransferase involved in the post-translational modification of proteins. It can catalyze the addition of adenosine monophosphate (AMP) or uridine monophosphate (UMP) to a protein, resulting in modifications known as AMPylation and UMPylation. The chain is Protein nucleotidyltransferase YdiU from Rhodopseudomonas palustris (strain TIE-1).